The following is a 575-amino-acid chain: Estrogen receptor beta (575 aa).

The segment at 1 to 160 (MSSSLSPTLQ…GAVVKRDMHF (160 aa)) is modulating. Positions 108–151 (DTKPHTSGRHSSFLSRPKLFGKRPEDGDGDEALDDDDPSSSSSG) are disordered. A compositionally biased stretch (acidic residues) spans 134 to 145 (GDGDEALDDDDP). 2 NR C4-type zinc fingers span residues 161 to 181 (CVVC…CEGC) and 197 to 221 (CPAT…LRKC). Residues 161–226 (CVVCHDYASG…RLRKCYEMGM (66 aa)) constitute a DNA-binding region (nuclear receptor). Residues 290–526 (SPEQLVYCIL…DLLLEMLDAN (237 aa)) enclose the NR LBD domain. Polar residues predominate over residues 537 to 549 (VCTDPVTPATSPN). The segment at 537–557 (VCTDPVTPATSPNTPLPPQLH) is disordered.

Belongs to the nuclear hormone receptor family. NR3 subfamily. In terms of assembly, binds DNA as a homodimer. Can form a heterodimer with ER-alpha. Ovary and testis.

It is found in the nucleus. Its function is as follows. Binds estrogens with an affinity similar to that of ER-alpha, and activates expression of reporter genes containing estrogen response elements (ERE) in an estrogen-dependent manner. The polypeptide is Estrogen receptor beta (esr2) (Ictalurus punctatus (Channel catfish)).